The primary structure comprises 355 residues: Protein RecA (355 aa).

65-72 provides a ligand contact to ATP; it reads GPESSGKT.

Belongs to the RecA family.

The protein resides in the cytoplasm. Its function is as follows. Can catalyze the hydrolysis of ATP in the presence of single-stranded DNA, the ATP-dependent uptake of single-stranded DNA by duplex DNA, and the ATP-dependent hybridization of homologous single-stranded DNAs. It interacts with LexA causing its activation and leading to its autocatalytic cleavage. The sequence is that of Protein RecA from Pseudomonas putida (strain GB-1).